The sequence spans 206 residues: Protein SUE1, mitochondrial (206 aa).

Residues 1-24 constitute a mitochondrion transit peptide; that stretch reads MILLKRTKIRGVSVSFVSLQRRTH.

Its subcellular location is the mitochondrion envelope. Functionally, required for degradation of unstable forms of cytochrome c. In Saccharomyces cerevisiae (strain ATCC 204508 / S288c) (Baker's yeast), this protein is Protein SUE1, mitochondrial.